Consider the following 887-residue polypeptide: Lateral signaling target protein 2 homolog (887 aa).

K87 is covalently cross-linked (Glycyl lysine isopeptide (Lys-Gly) (interchain with G-Cter in ubiquitin)). The tract at residues 308 to 327 (PALSAPLPPEGPLSAKAKDP) is disordered. S334 carries the post-translational modification Phosphoserine. Disordered stretches follow at residues 354-396 (DEMS…GSDE) and 412-474 (ALAR…ASLA). T516 is modified (phosphothreonine). Residue S586 is modified to Phosphoserine; by MAP2K. The interval 599–714 (LAKASDRAPE…THAAPQATRE (116 aa)) is disordered. Residues 602-612 (ASDRAPERQEE) show a composition bias toward basic and acidic residues. A compositionally biased stretch (polar residues) spans 638–648 (TSGSQVDTASG). Low complexity-rich tracts occupy residues 681-693 (SGSS…SCSS) and 700-711 (AAPAATHAAPQA). An FYVE-type zinc finger spans residues 817 to 879 (DEACGFCTAC…THCYMFHVTP (63 aa)). Zn(2+) contacts are provided by C823, C826, C839, C842, C847, C850, and C869. T870 is subject to Phosphothreonine; by MAP2K. C872 provides a ligand contact to Zn(2+).

Belongs to the lst-2 family. Interacts with TRIM3. Monoubiquitination at Lys-87 prevents binding to phosphatidylinositol 3-phosphate (PI3P) and localization to early endosome membranes.

The protein localises to the cytoplasm. Its subcellular location is the cytosol. It localises to the early endosome membrane. Negative regulator of epidermal growth factor receptor (EGFR) signaling. Acts by promoting EGFR degradation in endosomes when not monoubiquitinated. The sequence is that of Lateral signaling target protein 2 homolog (ZFYVE28) from Homo sapiens (Human).